Reading from the N-terminus, the 256-residue chain is Protein LIKE COV 1 (256 aa).

Over residues 1-10 (MANRERDREL) the composition is skewed to basic and acidic residues. Positions 1–39 (MANRERDRELLIPVADFGDKDDGSSSKPSSSSSASSSHQ) are disordered. At 1 to 60 (MANRERDRELLIPVADFGDKDDGSSSKPSSSSSASSSHQSGHETLSLFIRGWASKKFMTG) the chain is on the cytoplasmic side. Residues 25–39 (SSKPSSSSSASSSHQ) are compositionally biased toward low complexity. The helical transmembrane segment at 61 to 81 (CVILLPIAVTFYTTWWFIHFV) threads the bilayer. The Extracellular portion of the chain corresponds to 82 to 93 (DGFFSPIYALLG). A helical transmembrane segment spans residues 94-114 (INIFGFGFLTSIAFIFLVGVF). Over 115 to 256 (MSSWLGASVL…KPLASIGNES (142 aa)) the chain is Cytoplasmic.

The protein belongs to the plant COV1 protein family. As to expression, expressed at low levels in flowers, stems, roots and leaves.

The protein localises to the membrane. This chain is Protein LIKE COV 1, found in Arabidopsis thaliana (Mouse-ear cress).